The chain runs to 152 residues: Large ribosomal subunit protein bL9 (152 aa).

Belongs to the bacterial ribosomal protein bL9 family.

Its function is as follows. Binds to the 23S rRNA. This Prochlorococcus marinus (strain SARG / CCMP1375 / SS120) protein is Large ribosomal subunit protein bL9.